The primary structure comprises 105 residues: Malonate decarboxylase acyl carrier protein (105 aa).

An O-(phosphoribosyl dephospho-coenzyme A)serine modification is found at Ser28.

It belongs to the MdcC family. Post-translationally, covalently binds the prosthetic group of malonate decarboxylase.

It is found in the cytoplasm. In terms of biological role, subunit of malonate decarboxylase, it is an acyl carrier protein to which acetyl and malonyl thioester residues are bound via a 2'-(5''-phosphoribosyl)-3'-dephospho-CoA prosthetic group and turn over during the catalytic mechanism. The protein is Malonate decarboxylase acyl carrier protein of Xanthomonas euvesicatoria pv. vesicatoria (strain 85-10) (Xanthomonas campestris pv. vesicatoria).